The following is a 224-amino-acid chain: Transcription cofactor HES-6 (224 aa).

The interval Met-1–Pro-31 is disordered. Over residues Gly-8–Asp-25 the composition is skewed to basic and acidic residues. Residues Asp-25–Val-77 form the bHLH domain. An Orange domain is found at Phe-96–Leu-129. Residues Asp-147–Trp-161 show a composition bias toward low complexity. The tract at residues Asp-147 to Pro-205 is disordered. Positions Leu-181–Glu-190 are enriched in acidic residues. The WRPW motif motif lies at Trp-221–Trp-224.

In terms of assembly, transcription repression requires formation of a complex with a corepressor protein of the Groucho/TLE family. Interacts with HES1.

It is found in the nucleus. Does not bind DNA itself but suppresses both HES1-mediated N box-dependent transcriptional repression and binding of HES1 to E box sequences. Also suppresses HES1-mediated inhibition of the heterodimer formed by ASCL1/MASH1 and TCF3/E47, allowing ASCL1 and TCF3 to up-regulate transcription in its presence. Promotes cell differentiation. The protein is Transcription cofactor HES-6 of Homo sapiens (Human).